The sequence spans 321 residues: Lipoyl synthase (321 aa).

7 residues coordinate [4Fe-4S] cluster: Cys-68, Cys-73, Cys-79, Cys-94, Cys-98, Cys-101, and Ser-308. Positions 80 to 297 constitute a Radical SAM core domain; sequence FNHGTATFMI…KVLADELGFT (218 aa).

It belongs to the radical SAM superfamily. Lipoyl synthase family. [4Fe-4S] cluster serves as cofactor.

The protein resides in the cytoplasm. It catalyses the reaction [[Fe-S] cluster scaffold protein carrying a second [4Fe-4S](2+) cluster] + N(6)-octanoyl-L-lysyl-[protein] + 2 oxidized [2Fe-2S]-[ferredoxin] + 2 S-adenosyl-L-methionine + 4 H(+) = [[Fe-S] cluster scaffold protein] + N(6)-[(R)-dihydrolipoyl]-L-lysyl-[protein] + 4 Fe(3+) + 2 hydrogen sulfide + 2 5'-deoxyadenosine + 2 L-methionine + 2 reduced [2Fe-2S]-[ferredoxin]. Its pathway is protein modification; protein lipoylation via endogenous pathway; protein N(6)-(lipoyl)lysine from octanoyl-[acyl-carrier-protein]: step 2/2. In terms of biological role, catalyzes the radical-mediated insertion of two sulfur atoms into the C-6 and C-8 positions of the octanoyl moiety bound to the lipoyl domains of lipoate-dependent enzymes, thereby converting the octanoylated domains into lipoylated derivatives. The protein is Lipoyl synthase of Shewanella denitrificans (strain OS217 / ATCC BAA-1090 / DSM 15013).